A 600-amino-acid polypeptide reads, in one-letter code: Chaperone protein DnaK (600 aa).

Thr-175 bears the Phosphothreonine; by autocatalysis mark. The disordered stretch occupies residues 572–600 (FAQQTQQQDPNNQKDDVTEATVTDDSTKK). Residues 591–600 (ATVTDDSTKK) are compositionally biased toward polar residues.

The protein belongs to the heat shock protein 70 family.

In terms of biological role, acts as a chaperone. The protein is Chaperone protein DnaK of Ureaplasma urealyticum serovar 10 (strain ATCC 33699 / Western).